The chain runs to 361 residues: Probable cytosolic iron-sulfur protein assembly protein 1 (361 aa).

7 WD repeats span residues 10 to 49, 56 to 105, 120 to 160, 167 to 206, 213 to 265, 280 to 319, and 327 to 361; these read AHSD…NFPQ, THKR…TEIL, GHEN…EEFE, DHQH…DDWS, GHEG…SIKH, VHQY…SWSI, and HGVH…IWKP.

This sequence belongs to the WD repeat CIA1 family. Interacts with NAR1.

It is found in the cytoplasm. It localises to the nucleus. Functionally, essential component of the cytosolic iron-sulfur (Fe/S) protein assembly machinery. Required for the maturation of extramitochondrial Fe/S proteins. The chain is Probable cytosolic iron-sulfur protein assembly protein 1 from Scheffersomyces stipitis (strain ATCC 58785 / CBS 6054 / NBRC 10063 / NRRL Y-11545) (Yeast).